We begin with the raw amino-acid sequence, 194 residues long: CASP-like protein Ni6 (194 aa).

Topologically, residues 1–27 (MSSMETEKGAVPTPQAPPVAPTDNKYR) are cytoplasmic. Residues 28–48 (VVDVILRVLLLAASIASVVLM) form a helical membrane-spanning segment. The Extracellular portion of the chain corresponds to 49-75 (VTSKQTEIIVSPFGSRPNAAKFQNSPA). Residues 76-96 (FIYLVAALSVAGLYSIITALV) form a helical membrane-spanning segment. The Cytoplasmic segment spans residues 97–109 (SLSYMRKPIVPPK). The chain crosses the membrane as a helical span at residues 110-130 (LFWILLIHDVLLLGIVAAATG). Topologically, residues 131–161 (TAGGVGYIGLKGNTHVRWGKIRNVYDKFCRH) are extracellular. The chain crosses the membrane as a helical span at residues 162–182 (VGASIIVSLFAAAVLVLLVFV). The Cytoplasmic segment spans residues 183-194 (NANSLYRRIPKY).

The protein belongs to the Casparian strip membrane proteins (CASP) family. In terms of assembly, homodimer and heterodimers.

It is found in the cell membrane. The protein is CASP-like protein Ni6 (Ni6) of Beta vulgaris subsp. maritima (Sea beet).